Reading from the N-terminus, the 322-residue chain is MDESALERYFEDSIANDSGFILEEELGLHSPALSSTQDSTYLSGRAGPSRESGAELDLSFLPDDLSTQEELGHHDNTAQAEDRAVSQDSAVCLDYDSQNSATPAATFDQQNPSLLGGGVHNSPFYSMTPMTPMTPMTPVTERSGIIPQLQNIVSTVNLGCPLDLKFIALQARNAEYNPKRFAAVIMRIREPRTTALIFSSGKMVCTGAKSEEQSRLAARKYARVVQKLGFPARFMDFKIQNMVASCDVCFPIRLEGLVLTHQQFSSYEPELFPGLIYRMVKPRIVLLIFVSGKVVLTGAKERAEIYEAFENIYPILRGFRKQ.

The disordered stretch occupies residues 31–54 (PALSSTQDSTYLSGRAGPSRESGA). Residues 32–42 (ALSSTQDSTYL) are compositionally biased toward polar residues.

Belongs to the TBP family.

It is found in the nucleus. Functionally, TATA box-binding transcription factor. Members of the TBP family are differentially required to regulate transcription and development during early embryogenesis. The chain is TATA box-binding protein-like 2 from Takifugu rubripes (Japanese pufferfish).